An 84-amino-acid chain; its full sequence is MTFYERTVDLGLRAYKLTLSPLIGRQCRFTPSCSEYTAAALKDHGPLKGSWLGLRRICRCNPFGGSGYDPPPPRHQPRKWKCEE.

Positions 64–84 are disordered; that stretch reads GGSGYDPPPPRHQPRKWKCEE. The span at 75-84 shows a compositional bias: basic residues; that stretch reads HQPRKWKCEE.

This sequence belongs to the UPF0161 family.

Its subcellular location is the cell inner membrane. Could be involved in insertion of integral membrane proteins into the membrane. This chain is Putative membrane protein insertion efficiency factor, found in Caulobacter vibrioides (strain ATCC 19089 / CIP 103742 / CB 15) (Caulobacter crescentus).